Consider the following 453-residue polypeptide: Histidine--tRNA ligase (453 aa).

The protein belongs to the class-II aminoacyl-tRNA synthetase family. In terms of assembly, homodimer.

The protein localises to the cytoplasm. The enzyme catalyses tRNA(His) + L-histidine + ATP = L-histidyl-tRNA(His) + AMP + diphosphate + H(+). In Cytophaga hutchinsonii (strain ATCC 33406 / DSM 1761 / CIP 103989 / NBRC 15051 / NCIMB 9469 / D465), this protein is Histidine--tRNA ligase.